The following is a 581-amino-acid chain: Estrogen receptor (581 aa).

The tract at residues 1–144 (MYPEDSRGSG…GFEIAKEMRF (144 aa)) is modulating. Disordered regions lie at residues 45 to 66 (APLD…SGPN) and 96 to 122 (PVYR…DDSY). Positions 56 to 66 (GSLQSLGSGPN) are enriched in polar residues. Residues 100–109 (SSVPSSQQSV) are compositionally biased toward low complexity. 2 consecutive NR C4-type zinc fingers follow at residues 145–165 (CAVC…CEGC) and 181–205 (CPAT…LRKC). Residues 145–210 (CAVCSDYASG…RLRKCYEVGM (66 aa)) constitute a DNA-binding region (nuclear receptor). Residues 211–272 (MKGGMRKDRG…GGGKSSMISM (62 aa)) are hinge. The span at 216 to 246 (RKDRGRVLRRDKQRTGTSDRDKASKGLEHRT) shows a compositional bias: basic and acidic residues. The tract at residues 216 to 268 (RKDRGRVLRRDKQRTGTSDRDKASKGLEHRTAPPQDRRKHISSSAGGGGGKSS) is disordered. Residues 273-509 (PPDQVLLLLQ…DLLLEMLDAH (237 aa)) enclose the NR LBD domain. Basic and acidic residues predominate over residues 516 to 528 (RPAETWSQADREP). The interval 516–581 (RPAETWSQAD…GSRSECTHIL (66 aa)) is disordered. Residues 536-547 (SGGGGGGGGGSS) show a composition bias toward gly residues.

The protein belongs to the nuclear hormone receptor family. NR3 subfamily. Binds DNA as a homodimer. Can form a heterodimer with ER-beta.

The protein resides in the nucleus. The steroid hormones and their receptors are involved in the regulation of eukaryotic gene expression and affect cellular proliferation and differentiation in target tissues. The chain is Estrogen receptor (esr1) from Pagrus major (Red sea bream).